The sequence spans 742 residues: Collectin-12 (742 aa).

The Cytoplasmic portion of the chain corresponds to 1–37 (MKDDFAEEEEVQSFGYKRFGIQEGTQCTKCKNNWALK). A helical; Signal-anchor for type II membrane protein membrane pass occupies residues 38 to 58 (FSIVLLYILCALLTITVAILG). The Extracellular portion of the chain corresponds to 59–742 (YKVVEKMDNV…EREAVPSSIL (684 aa)). An N-linked (GlcNAc...) asparagine glycan is attached at Asn67. The stretch at 73–142 (ETSHQTYDNK…KDTLEKLQAN (70 aa)) forms a coiled coil. 2 N-linked (GlcNAc...) asparagine glycosylation sites follow: Asn159 and Asn168. Positions 205 to 254 (NLNNLNLTQVQQRNLISNLQQSVDDTSLAIQRIKNDFQNLQQVFLQAKKD) form a coiled coil. N-linked (GlcNAc...) asparagine glycosylation occurs at Asn271. The interval 439 to 608 (TILQGPPGPR…TPASEVNGCP (170 aa)) is disordered. Collagen-like domains follow at residues 452–511 (GDRG…KGSR) and 527–586 (GPPG…PGPS). Over residues 501–514 (SKGSQGPKGSRGSP) the composition is skewed to low complexity. Residues 516–532 (KPGPQGPSGDPGPPGPP) show a composition bias toward pro residues. The segment covering 534 to 556 (KDGLPGPQGPPGFQGLQGTVGEP) has biased composition (low complexity). Residues 571–585 (PGMPGPKGPPGPPGP) are compositionally biased toward pro residues. 3 disulfide bridges follow: Cys607–Cys618, Cys635–Cys730, and Cys708–Cys722. In terms of domain architecture, C-type lectin spans 614 to 731 (FTDKCYYFSL…CDEINNFICE (118 aa)). Ca(2+) is bound by residues Phe644, Asn646, Glu650, Asp670, and Glu674. A carbohydrate contacts are provided by Lys691, Gln694, and Asp696. Ca(2+) is bound by residues Gln694, Asp696, Asn697, Glu706, Asp707, Asn718, Asp719, and Glu731. A carbohydrate is bound at residue Glu706. Positions 718 and 719 each coordinate a carbohydrate.

The extracellular domain forms a stable trimer. The extracellular domain interacts with fibrillar amyloid-beta peptide. As to expression, expressed in vascular endothelial cells in the heart, in perivascular macrophage and smooth muscle cells. Expressed in plaques-surrounding reactive astrocytes located in cerebral cortex and hippocampus and in leptomeningeal vessels showing characteristics of cerebral amyloid angiopathy (CAA) in a double transgenic mouse model of Alzheimer disease (at protein level). Strongly expressed in lung. Moderately expressed in heart, skeletal muscle, spleen, liver, brain, colon, testis, stomach and kidney. Expressed in neonatal astrocytes. Expressed in reactive astrocytes and vascular/perivascular cells in the brain of a double transgenic mouse model of Alzheimer disease.

Its subcellular location is the membrane. Its function is as follows. Scavenger receptor that displays several functions associated with host defense. Promotes binding and phagocytosis of Gram-positive, Gram-negative bacteria and yeast. Also binds to sialyl Lewis X or a trisaccharide and asialo-orosomucoid (ASOR). Mediates the recognition, internalization and degradation of oxidatively modified low density lipoprotein (oxLDL) by vascular endothelial cells. Binds to several carbohydrates including Gal-type ligands, D-galactose, L- and D-fucose, GalNAc, T and Tn antigens in a calcium-dependent manner and internalizes specifically GalNAc in nurse-like cells. The sequence is that of Collectin-12 (Colec12) from Mus musculus (Mouse).